A 327-amino-acid chain; its full sequence is Phenylalanine--tRNA ligase alpha subunit (327 aa).

E252 contacts Mg(2+).

Belongs to the class-II aminoacyl-tRNA synthetase family. Phe-tRNA synthetase alpha subunit type 1 subfamily. In terms of assembly, tetramer of two alpha and two beta subunits. Mg(2+) serves as cofactor.

Its subcellular location is the cytoplasm. The enzyme catalyses tRNA(Phe) + L-phenylalanine + ATP = L-phenylalanyl-tRNA(Phe) + AMP + diphosphate + H(+). This is Phenylalanine--tRNA ligase alpha subunit from Serratia proteamaculans (strain 568).